The sequence spans 310 residues: Olfactory receptor 1496 (310 aa).

Over 1–23 (MNNQTFITQFLLLGLPIPEEHQH) the chain is Extracellular. Asn-3 carries an N-linked (GlcNAc...) asparagine glycan. Residues 24 to 48 (LFYALFLVMYLTTILGNLLIIVLVQ) traverse the membrane as a helical segment. The Cytoplasmic segment spans residues 49 to 55 (LDSQLHT). A helical membrane pass occupies residues 56–77 (PMYLFLSNLSFSDLCFSSVTMP). Topologically, residues 78–98 (KLLQNMRSQDTSIPYGGCLAQ) are extracellular. Cys-95 and Cys-187 form a disulfide bridge. The chain crosses the membrane as a helical span at residues 99–118 (TYFFMVFGDMESFLLVAMAY). The Cytoplasmic segment spans residues 119-137 (DRYVAICFPLHYTSIMSPK). A helical membrane pass occupies residues 138 to 156 (LCTCLVLLLWMLTTSHAMM). Residues 157–194 (HTLLAARLSFCENNVVLNFFCDLFVLLKLACSDTYINE) lie on the Extracellular side of the membrane. Residues 195 to 217 (LMIFIMSTLLIIIPFFLIVMSYA) form a helical membrane-spanning segment. The Cytoplasmic portion of the chain corresponds to 218-234 (RIISSILKVPSTQGICK). A helical transmembrane segment spans residues 235 to 258 (VFSTCGSHLSVVSLFYGTIIGLYL). The Extracellular segment spans residues 259–270 (CPAGNNSTVKEM). A helical membrane pass occupies residues 271-290 (VMAMMYTVVTPMLNPFIYSL). Topologically, residues 291-310 (RNRDMKRALIRVICSMKITL) are cytoplasmic.

This sequence belongs to the G-protein coupled receptor 1 family. In terms of tissue distribution, olfactory epithelium.

Its subcellular location is the cell membrane. Its function is as follows. Odorant receptor. This chain is Olfactory receptor 1496 (Olr1496), found in Rattus norvegicus (Rat).